Here is a 188-residue protein sequence, read N- to C-terminus: Elongation factor P-like protein (188 aa).

It belongs to the elongation factor P family.

The protein is Elongation factor P-like protein of Xylella fastidiosa (strain 9a5c).